A 264-amino-acid chain; its full sequence is Thymidylate synthase (264 aa).

Position 21 (R21) interacts with dUMP. H51 contributes to the (6R)-5,10-methylene-5,6,7,8-tetrahydrofolate binding site. R126–R127 lines the dUMP pocket. The Nucleophile role is filled by C146. DUMP contacts are provided by residues R166–D169, N177, and H207–Y209. D169 contributes to the (6R)-5,10-methylene-5,6,7,8-tetrahydrofolate binding site. A263 lines the (6R)-5,10-methylene-5,6,7,8-tetrahydrofolate pocket.

The protein belongs to the thymidylate synthase family. Bacterial-type ThyA subfamily. Homodimer.

The protein resides in the cytoplasm. It carries out the reaction dUMP + (6R)-5,10-methylene-5,6,7,8-tetrahydrofolate = 7,8-dihydrofolate + dTMP. Its pathway is pyrimidine metabolism; dTTP biosynthesis. Its function is as follows. Catalyzes the reductive methylation of 2'-deoxyuridine-5'-monophosphate (dUMP) to 2'-deoxythymidine-5'-monophosphate (dTMP) while utilizing 5,10-methylenetetrahydrofolate (mTHF) as the methyl donor and reductant in the reaction, yielding dihydrofolate (DHF) as a by-product. This enzymatic reaction provides an intracellular de novo source of dTMP, an essential precursor for DNA biosynthesis. This chain is Thymidylate synthase, found in Rhizobium meliloti (strain 1021) (Ensifer meliloti).